Consider the following 114-residue polypeptide: Hydrogenase maturation factor HypA (114 aa).

H2 contributes to the Ni(2+) binding site. Residues C73, C76, C89, and C92 each coordinate Zn(2+).

Belongs to the HypA/HybF family.

Its function is as follows. Involved in the maturation of [NiFe] hydrogenases. Required for nickel insertion into the metal center of the hydrogenase. The protein is Hydrogenase maturation factor HypA of Desulfitobacterium hafniense (strain DSM 10664 / DCB-2).